The sequence spans 350 residues: Vetispiradiene synthase 3 (350 aa).

Residues Asp103, Asp107, Asp246, Thr250, and Glu254 each contribute to the Mg(2+) site. The DDXXD motif signature appears at 103–107; that stretch reads DDTFD.

This sequence belongs to the terpene synthase family. Tpsa subfamily. Requires Mg(2+) as cofactor.

The protein resides in the cytoplasm. It catalyses the reaction (2E,6E)-farnesyl diphosphate = (-)-vetispiradiene + diphosphate. Its pathway is secondary metabolite biosynthesis; terpenoid biosynthesis. Sesquiterpene synthase that catalyzes the formation of vetispiradiene from trans,trans-farnesyl diphosphate. The initial internal cyclization produces the monocyclic intermediate germacrene A. This Hyoscyamus muticus (Egyptian henbane) protein is Vetispiradiene synthase 3.